The following is a 1113-amino-acid chain: Receptor-type guanylate cyclase gcy-18 (1113 aa).

Residues 1 to 18 (MLKTLLFILIFFNIPIIA) form the signal peptide. Topologically, residues 19-499 (IEEIPDIKEN…RGQRCSYLLE (481 aa)) are extracellular. N72, N369, and N456 each carry an N-linked (GlcNAc...) asparagine glycan. Residues 500-520 (ISVGSLIILLILISVVFFFLF) form a helical membrane-spanning segment. The Cytoplasmic portion of the chain corresponds to 521-1113 (RYCENKQLEK…TNYIQNVEGV (593 aa)). The Protein kinase domain occupies 543 to 848 (IDEEQVKSMM…RVRLNTEMVL (306 aa)). Residues 853–884 (SLVDQMMKMMEQYANNLEKLVAERTGMLEEAN) are a coiled coil. Residues 918 to 1048 (TILFSDIVGF…DTVNVSSRME (131 aa)) form the Guanylate cyclase domain. Mg(2+) contacts are provided by D923, I924, and D967.

This sequence belongs to the adenylyl cyclase class-4/guanylyl cyclase family. In terms of tissue distribution, expressed specifically in AFD sensory neurons.

It localises to the cell membrane. The protein resides in the cell projection. The protein localises to the cilium. The catalysed reaction is GTP = 3',5'-cyclic GMP + diphosphate. In terms of biological role, guanylate cyclase involved in the production of the second messenger cGMP. Regulates thermotaxis responses in AFD sensory neurons. May regulate AFD neuronal activity such as calcium responses to temperature gradients. In Caenorhabditis elegans, this protein is Receptor-type guanylate cyclase gcy-18.